A 434-amino-acid chain; its full sequence is Monodehydroascorbate reductase, seedling isozyme (434 aa).

FAD contacts are provided by residues 13–16 (GGVA), E40, R47, K52, I95, and 146–147 (RE). NAD(+) contacts are provided by residues 171 to 177 (GGYIGLE), E195, R201, and G260. 173-177 (YIGLE) is an NADP(+) binding site. Residues R201 and G260 each coordinate NADP(+). D297 lines the FAD pocket. 313–314 (EH) contacts NAD(+). An NADP(+)-binding site is contributed by 313–314 (EH). V315 lines the FAD pocket. An L-ascorbate-binding site is contributed by R319. An FAD-binding site is contributed by Y348. Y348 contacts NAD(+). Y348 provides a ligand contact to NADP(+). R350 is an L-ascorbate binding site.

It belongs to the FAD-dependent oxidoreductase family. Requires FAD as cofactor.

Its subcellular location is the cytoplasm. It carries out the reaction 2 monodehydro-L-ascorbate radical + NADH + H(+) = 2 L-ascorbate + NAD(+). Functionally, catalyzes the conversion of monodehydroascorbate to ascorbate, oxidizing NADH in the process. The chain is Monodehydroascorbate reductase, seedling isozyme from Cucumis sativus (Cucumber).